We begin with the raw amino-acid sequence, 82 residues long: Polyferredoxin protein FwdG (82 aa).

2 consecutive 4Fe-4S ferredoxin-type domains span residues 4–33 (YELVVYPERCHGCGNCVVSCPVNAKHPETW) and 51–80 (VVTVVNQDLCGGCGACIEACPVNAIELVFK). [4Fe-4S] cluster is bound by residues Cys13, Cys16, Cys19, Cys23, Cys60, Cys63, Cys66, and Cys70.

The cofactor is [4Fe-4S] cluster.

The polypeptide is Polyferredoxin protein FwdG (fwdG) (Methanocaldococcus jannaschii (strain ATCC 43067 / DSM 2661 / JAL-1 / JCM 10045 / NBRC 100440) (Methanococcus jannaschii)).